An 854-amino-acid polypeptide reads, in one-letter code: Protein mono-ADP-ribosyltransferase PARP9 (854 aa).

2 Macro domains span residues 107 to 296 and 306 to 487; these read LQVF…EFIL and TPSF…AKRS. In terms of domain architecture, PARP catalytic spans 628–850; that stretch reads IQQQKTQDEM…QHPWRGFASG (223 aa).

This sequence belongs to the ARTD/PARP family. As to quaternary structure, forms a stable complex with E3 ligase DTX3L; the interaction is required for PARP9 mediated ADP-ribosylation of ubiquitin. Interacts (via PARP catalytic domain) with DTX3L (via N-terminus). Forms a complex with STAT1 and DTX3L independently of IFNB1 or IFNG-mediated STAT1 'Tyr-701' phosphorylation. Forms a complex with STAT1, DTX3L and histone H2B H2BC9/H2BJ; the interaction is likely to induce H2BC9/H2BJ ubiquitination. Interacts (via N-terminus) with STAT1. Interacts with PARP14 in IFNG-stimulated macrophages; the interaction prevents PARP14-mediated STAT1 and STAT6 ADP-riboslylation. Interacts with PARP1 (when poly-ADP-ribosylated). Post-translationally, ADP-ribosylated by PARP14. In terms of tissue distribution, expressed in lymphocyte-rich tissues, spleen, lymph nodes, peripheral blood lymphocytes and colonic mucosa. Expressed in macrophages. Also expressed in nonhematopoietic tissues such as heart and skeletal muscle. Isoform 2 is the predominant form. Most abundantly expressed in lymphomas with a brisk host inflammatory response. In diffuse large B-cell lymphomas tumors, expressed specifically by malignant B-cells.

It is found in the cytoplasm. Its subcellular location is the cytosol. It localises to the nucleus. The catalysed reaction is [protein]-C-terminal glycine + NAD(+) = [protein]-C-terminal O-(ADP-D-ribosyl)-glycine + nicotinamide. With respect to regulation, binding to poly(ADP-ribose) does not affect its activity. Functionally, ADP-ribosyltransferase which, in association with E3 ligase DTX3L, plays a role in DNA damage repair and in immune responses including interferon-mediated antiviral defenses. Within the complex, enhances DTX3L E3 ligase activity which is further enhanced by PARP9 binding to poly(ADP-ribose). In association with DTX3L and in presence of E1 and E2 enzymes, mediates NAD(+)-dependent mono-ADP-ribosylation of ubiquitin which prevents ubiquitin conjugation to substrates such as histones. During DNA repair, PARP1 recruits PARP9/BAL1-DTX3L complex to DNA damage sites via PARP9 binding to ribosylated PARP1. Subsequent PARP1-dependent PARP9/BAL1-DTX3L-mediated ubiquitination promotes the rapid and specific recruitment of 53BP1/TP53BP1, UIMC1/RAP80, and BRCA1 to DNA damage sites. In response to DNA damage, PARP9-DTX3L complex is required for efficient non-homologous end joining (NHEJ); the complex function is negatively modulated by PARP9 activity. Dispensable for B-cell receptor (BCR) assembly through V(D)J recombination and class switch recombination (CSR). In macrophages, positively regulates pro-inflammatory cytokines production in response to IFNG stimulation by suppressing PARP14-mediated STAT1 ADP-ribosylation and thus promoting STAT1 phosphorylation. Also suppresses PARP14-mediated STAT6 ADP-ribosylation. This is Protein mono-ADP-ribosyltransferase PARP9 (PARP9) from Homo sapiens (Human).